We begin with the raw amino-acid sequence, 453 residues long: Bifunctional protein GlmU (453 aa).

Residues Met1–Lys225 form a pyrophosphorylase region. UDP-N-acetyl-alpha-D-glucosamine is bound by residues Leu6 to Gly9, Lys20, Gln71, Gly76 to Thr77, Tyr98 to Asp100, Gly135, Glu150, Asn165, and Asn223. Asp100 contacts Mg(2+). Asn223 contacts Mg(2+). A linker region spans residues Ala226–Asp246. Positions Gly247–Ser453 are N-acetyltransferase. Residues Arg329 and Lys347 each contribute to the UDP-N-acetyl-alpha-D-glucosamine site. His359 acts as the Proton acceptor in catalysis. Residues Tyr362 and Asn373 each coordinate UDP-N-acetyl-alpha-D-glucosamine. Residues Ala376, Asn382–Tyr383, Ser401, and Ala419 each bind acetyl-CoA.

It in the N-terminal section; belongs to the N-acetylglucosamine-1-phosphate uridyltransferase family. The protein in the C-terminal section; belongs to the transferase hexapeptide repeat family. Homotrimer. The cofactor is Mg(2+).

The protein resides in the cytoplasm. It catalyses the reaction alpha-D-glucosamine 1-phosphate + acetyl-CoA = N-acetyl-alpha-D-glucosamine 1-phosphate + CoA + H(+). It carries out the reaction N-acetyl-alpha-D-glucosamine 1-phosphate + UTP + H(+) = UDP-N-acetyl-alpha-D-glucosamine + diphosphate. The protein operates within nucleotide-sugar biosynthesis; UDP-N-acetyl-alpha-D-glucosamine biosynthesis; N-acetyl-alpha-D-glucosamine 1-phosphate from alpha-D-glucosamine 6-phosphate (route II): step 2/2. It participates in nucleotide-sugar biosynthesis; UDP-N-acetyl-alpha-D-glucosamine biosynthesis; UDP-N-acetyl-alpha-D-glucosamine from N-acetyl-alpha-D-glucosamine 1-phosphate: step 1/1. It functions in the pathway bacterial outer membrane biogenesis; LPS lipid A biosynthesis. In terms of biological role, catalyzes the last two sequential reactions in the de novo biosynthetic pathway for UDP-N-acetylglucosamine (UDP-GlcNAc). The C-terminal domain catalyzes the transfer of acetyl group from acetyl coenzyme A to glucosamine-1-phosphate (GlcN-1-P) to produce N-acetylglucosamine-1-phosphate (GlcNAc-1-P), which is converted into UDP-GlcNAc by the transfer of uridine 5-monophosphate (from uridine 5-triphosphate), a reaction catalyzed by the N-terminal domain. The protein is Bifunctional protein GlmU of Burkholderia orbicola (strain AU 1054).